Consider the following 176-residue polypeptide: Ribosome maturation factor RimM (176 aa).

A PRC barrel domain is found at 93-166; sequence ADEYYHADLI…QVVIEPPNEI (74 aa).

It belongs to the RimM family. Binds ribosomal protein uS19.

It localises to the cytoplasm. Its function is as follows. An accessory protein needed during the final step in the assembly of 30S ribosomal subunit, possibly for assembly of the head region. Essential for efficient processing of 16S rRNA. May be needed both before and after RbfA during the maturation of 16S rRNA. It has affinity for free ribosomal 30S subunits but not for 70S ribosomes. The protein is Ribosome maturation factor RimM of Rhodopseudomonas palustris (strain ATCC BAA-98 / CGA009).